A 329-amino-acid polypeptide reads, in one-letter code: UDP-N-acetylenolpyruvoylglucosamine reductase (329 aa).

The region spanning 28-192 (RVGGPADLLC…ARVEVRLHPG (165 aa)) is the FAD-binding PCMH-type domain. Arg172 is a catalytic residue. The active-site Proton donor is Ser221. Residue Glu291 is part of the active site. The tract at residues 307–329 (DGHAAAGGGPGAASGGVRPPEAT) is disordered. Over residues 311–320 (AAGGGPGAAS) the composition is skewed to gly residues.

It belongs to the MurB family. It depends on FAD as a cofactor.

The protein localises to the cytoplasm. The enzyme catalyses UDP-N-acetyl-alpha-D-muramate + NADP(+) = UDP-N-acetyl-3-O-(1-carboxyvinyl)-alpha-D-glucosamine + NADPH + H(+). The protein operates within cell wall biogenesis; peptidoglycan biosynthesis. Functionally, cell wall formation. The sequence is that of UDP-N-acetylenolpyruvoylglucosamine reductase from Anaeromyxobacter dehalogenans (strain 2CP-1 / ATCC BAA-258).